Here is a 609-residue protein sequence, read N- to C-terminus: All-trans-retinol 13,14-reductase (609 aa).

Positions 1–21 (MWITALLLVVLLLVVVHRVYV) are cleaved as a signal peptide.

The protein belongs to the carotenoid/retinoid oxidoreductase family. CrtISO subfamily. NAD(+) is required as a cofactor. It depends on NADP(+) as a cofactor. The cofactor is FAD. As to expression, highly expressed in liver, kidney and heart.

It is found in the endoplasmic reticulum membrane. The enzyme catalyses all-trans-13,14-dihydroretinol + A = all-trans-retinol + AH2. Catalyzes the saturation of all-trans-retinol to all-trans-13,14-dihydroretinol. Does not exhibit any activity toward all-trans-retinoic acid, nor 9-cis, 11-cis or 13-cis-retinol isomers. May play a role in the metabolism of vitamin A. Independently of retinol conversion, may regulate liver metabolism upstream of MLXIPL/ChREBP. May play a role in adipocyte differentiation. The sequence is that of All-trans-retinol 13,14-reductase (Retsat) from Rattus norvegicus (Rat).